We begin with the raw amino-acid sequence, 123 residues long: Glycophorin-B (123 aa).

A signal peptide spans 1 to 19; that stretch reads MYGKIIFVLLLSEIVSISA. Residues 93–113 traverse the membrane as a helical segment; the sequence is VVIILIILCVMAGVIGTILLI.

The protein belongs to the glycophorin-A family. Component of the ankyrin-1 complex in the erythrocyte, composed of ANK1, RHCE, RHAG, SLC4A1, EPB42, GYPA, GYPB and AQP1. Interacts (via the N-terminal) with RHAG; this interaction bridges the (RHAG)2(RHCE) heterotrimer with the SLC4A1 Band 3 I dimer complexed with GYPA. The N-terminal extracellular domain is heavily glycosylated on serine and threonine residues.

It is found in the cell membrane. Component of the ankyrin-1 complex, a multiprotein complex involved in the stability and shape of the erythrocyte membrane. The sequence is that of Glycophorin-B from Pan troglodytes (Chimpanzee).